We begin with the raw amino-acid sequence, 612 residues long: MDIKKLKDYQNHIRNFSIVAHIDHGKSTIADRILELTDTVSERQLKNQMLDDMPLERQRGITIKMNSVEVKYHAKNGEDYIFHLIDTPGHVDFSYEVSRSLAACEGALLVVDASQGVQAQTLANTYLAIDDDLEIVPVINKIDLPSADPENAKEEIEEMLGLDASDAVEVSGKTGQGIPELLEKIVTDIPAPSGDIEAPLKALIFDSKYDDYRGVVLSVRIEDGTVKPGDKIQIMNTGKEYEVTEVGVSSPHPVKKDILIAGDVGYITANIKSVRETRVGDTITDAGHPTAEPLPGYRQIPPMVYSGMYPVDNRDYDDLKEALQKLQLNDAALEFEPETSTALGFGFRCGFLGLLHMDVVQERLEQEFDLDLIMTAPSVDYHAIMNDGTTKVIDNPSDLPDAGEYKEVQEPYVKAEIMVPNDYVGPVMELCQRKRGEFVTMDYLDKYRVNVIYNMPLAEIIFDFFDDLKSSTKGYASLDYEITGYRATDLVKIDILLNKEPIDALSFIAHRSEAQDRARQMTSMLKKLIPRQNFEVDIQGAIGAKIISRATIKPYRKDVTWKIHTGDPDRRAKLLEKQKRGKKRMKAVGRVEVPQDAFMAVLKMNDDDIKGK.

The 183-residue stretch at 11–193 (NHIRNFSIVA…KIVTDIPAPS (183 aa)) folds into the tr-type G domain. GTP-binding positions include 23–28 (DHGKST) and 140–143 (NKID).

Belongs to the TRAFAC class translation factor GTPase superfamily. Classic translation factor GTPase family. LepA subfamily.

The protein localises to the cell membrane. It catalyses the reaction GTP + H2O = GDP + phosphate + H(+). In terms of biological role, required for accurate and efficient protein synthesis under certain stress conditions. May act as a fidelity factor of the translation reaction, by catalyzing a one-codon backward translocation of tRNAs on improperly translocated ribosomes. Back-translocation proceeds from a post-translocation (POST) complex to a pre-translocation (PRE) complex, thus giving elongation factor G a second chance to translocate the tRNAs correctly. Binds to ribosomes in a GTP-dependent manner. This Lactobacillus acidophilus (strain ATCC 700396 / NCK56 / N2 / NCFM) protein is Elongation factor 4.